Reading from the N-terminus, the 262-residue chain is Cytochrome c oxidase subunit 3 (262 aa).

A run of 6 helical transmembrane segments spans residues 39–59 (YTMT…YQWW), 83–103 (GMIL…WAFF), 120–140 (VGII…ILLA), 163–183 (GLFF…YEYI), 201–221 (ATGF…ICFL), and 240–260 (AWYW…IYWW).

The protein belongs to the cytochrome c oxidase subunit 3 family. In terms of assembly, component of the cytochrome c oxidase (complex IV, CIV), a multisubunit enzyme composed of a catalytic core of 3 subunits and several supernumerary subunits. The complex exists as a monomer or a dimer and forms supercomplexes (SCs) in the inner mitochondrial membrane with ubiquinol-cytochrome c oxidoreductase (cytochrome b-c1 complex, complex III, CIII).

It localises to the mitochondrion inner membrane. It catalyses the reaction 4 Fe(II)-[cytochrome c] + O2 + 8 H(+)(in) = 4 Fe(III)-[cytochrome c] + 2 H2O + 4 H(+)(out). Functionally, component of the cytochrome c oxidase, the last enzyme in the mitochondrial electron transport chain which drives oxidative phosphorylation. The respiratory chain contains 3 multisubunit complexes succinate dehydrogenase (complex II, CII), ubiquinol-cytochrome c oxidoreductase (cytochrome b-c1 complex, complex III, CIII) and cytochrome c oxidase (complex IV, CIV), that cooperate to transfer electrons derived from NADH and succinate to molecular oxygen, creating an electrochemical gradient over the inner membrane that drives transmembrane transport and the ATP synthase. Cytochrome c oxidase is the component of the respiratory chain that catalyzes the reduction of oxygen to water. Electrons originating from reduced cytochrome c in the intermembrane space (IMS) are transferred via the dinuclear copper A center (CU(A)) of subunit 2 and heme A of subunit 1 to the active site in subunit 1, a binuclear center (BNC) formed by heme A3 and copper B (CU(B)). The BNC reduces molecular oxygen to 2 water molecules using 4 electrons from cytochrome c in the IMS and 4 protons from the mitochondrial matrix. The chain is Cytochrome c oxidase subunit 3 (COIII) from Anopheles quadrimaculatus (Common malaria mosquito).